Reading from the N-terminus, the 834-residue chain is Periplasmic nitrate reductase (834 aa).

The segment at residues 1 to 29 (MNLTRREFAKANAAAIAAAAAGLPILVRA) is a signal peptide (tat-type signal). The 57-residue stretch at 41–97 (LDWNKAPCRFCGTGCSVMVATRDGQVVATHGDIKAEVNRGINCVKGYFLSKIMYGSD) folds into the 4Fe-4S Mo/W bis-MGD-type domain. Cysteine 48, cysteine 51, cysteine 55, and cysteine 83 together coordinate [4Fe-4S] cluster. Residues lysine 85, glutamine 152, asparagine 177, cysteine 181, 214-221 (WGSNMAEM), 245-249 (STFEH), 264-266 (QTD), methionine 375, glutamine 379, asparagine 485, 511-512 (SD), lysine 534, aspartate 561, and 721-730 (TGRVLEHWHT) contribute to the Mo-bis(molybdopterin guanine dinucleotide) site. A substrate-binding site is contributed by phenylalanine 797. Mo-bis(molybdopterin guanine dinucleotide)-binding residues include asparagine 805 and lysine 822.

This sequence belongs to the prokaryotic molybdopterin-containing oxidoreductase family. NasA/NapA/NarB subfamily. Component of the periplasmic nitrate reductase NapAB complex composed of NapA and NapB. Requires [4Fe-4S] cluster as cofactor. Mo-bis(molybdopterin guanine dinucleotide) is required as a cofactor. Predicted to be exported by the Tat system. The position of the signal peptide cleavage has not been experimentally proven.

The protein localises to the periplasm. It carries out the reaction 2 Fe(II)-[cytochrome] + nitrate + 2 H(+) = 2 Fe(III)-[cytochrome] + nitrite + H2O. Catalytic subunit of the periplasmic nitrate reductase complex NapAB. Receives electrons from NapB and catalyzes the reduction of nitrate to nitrite. This chain is Periplasmic nitrate reductase, found in Pseudomonas paraeruginosa (strain DSM 24068 / PA7) (Pseudomonas aeruginosa (strain PA7)).